A 138-amino-acid polypeptide reads, in one-letter code: Low molecular weight protein-tyrosine-phosphatase PtpB (138 aa).

The active-site Nucleophile is the C7. The active site involves R13. The active-site Proton donor is D111.

Belongs to the low molecular weight phosphotyrosine protein phosphatase family.

The catalysed reaction is O-phospho-L-tyrosyl-[protein] + H2O = L-tyrosyl-[protein] + phosphate. Dephosphorylates the phosphotyrosine-containing proteins. The polypeptide is Low molecular weight protein-tyrosine-phosphatase PtpB (ptpB) (Staphylococcus haemolyticus (strain JCSC1435)).